Consider the following 360-residue polypeptide: mRNA cap guanine-N(7) methyltransferase (360 aa).

The disordered stretch occupies residues 1 to 62 (MSSSNSRVHE…NRHENNGNAQ (62 aa)). A compositionally biased stretch (basic and acidic residues) spans 7–19 (RVHEEQPPTENRR). In terms of domain architecture, mRNA cap 0 methyltransferase spans 83–358 (SPIIQLKRFN…FYLAFAFEKR (276 aa)). 92 to 93 (NN) contributes to the mRNA binding site. Residues K96, G118, D140, D168, Q191, and Y196 each coordinate S-adenosyl-L-methionine.

This sequence belongs to the class I-like SAM-binding methyltransferase superfamily. mRNA cap 0 methyltransferase family. As to quaternary structure, interacts with cdk9.

The protein localises to the nucleus. It carries out the reaction a 5'-end (5'-triphosphoguanosine)-ribonucleoside in mRNA + S-adenosyl-L-methionine = a 5'-end (N(7)-methyl 5'-triphosphoguanosine)-ribonucleoside in mRNA + S-adenosyl-L-homocysteine. Responsible for methylating the 5'-cap structure of mRNAs. This Schizosaccharomyces pombe (strain 972 / ATCC 24843) (Fission yeast) protein is mRNA cap guanine-N(7) methyltransferase (pcm1).